Consider the following 343-residue polypeptide: Anthranilate phosphoribosyltransferase (343 aa).

Residues Gly84, 87-88 (GD), Thr92, 94-97 (NIST), 112-120 (KHGNRSASS), and Ser124 each bind 5-phospho-alpha-D-ribose 1-diphosphate. Residue Gly84 coordinates anthranilate. Position 96 (Ser96) interacts with Mg(2+). Residue Asn115 participates in anthranilate binding. Arg170 is a binding site for anthranilate. 2 residues coordinate Mg(2+): Asp229 and Glu230.

It belongs to the anthranilate phosphoribosyltransferase family. In terms of assembly, homodimer. Mg(2+) is required as a cofactor.

It catalyses the reaction N-(5-phospho-beta-D-ribosyl)anthranilate + diphosphate = 5-phospho-alpha-D-ribose 1-diphosphate + anthranilate. It functions in the pathway amino-acid biosynthesis; L-tryptophan biosynthesis; L-tryptophan from chorismate: step 2/5. In terms of biological role, catalyzes the transfer of the phosphoribosyl group of 5-phosphorylribose-1-pyrophosphate (PRPP) to anthranilate to yield N-(5'-phosphoribosyl)-anthranilate (PRA). This chain is Anthranilate phosphoribosyltransferase, found in Bordetella avium (strain 197N).